The chain runs to 125 residues: Diol dehydratase-reactivating factor small subunit (125 aa).

Glu-31 is a binding site for Mg(2+).

This sequence belongs to the DdrB/PduH family. As to quaternary structure, component of the DDR complex, a heterotetramer of DdrA(2)/DdrB(2). The DDR complex interacts with the diol dehydratase complex in the presence of ADP but not ATP. It depends on Mg(2+) as a cofactor.

The catalysed reaction is ATP + H2O = ADP + phosphate + H(+). Its function is as follows. Small subunit of the diol dehydratase-reactivating factor (DDR), which reactivates suicidally inhibited adenosylcobalamin-dependent diol dehydratase (DD, pddA, pddB, pddC). DDR acts as a chaperone, reactivates inactivated DD holoenzyme in the presence of ATP, Mg(2+) and free adenosylcobalamin (AdoCbl), by mediating the exchange of the tightly bound damaged cofactor AdoCbl for a free intact one. Reactivation takes place in two steps: ADP-dependent cobalamin release, and ATP-dependent dissociation of the DD apoenzyme-DDR complex. DDR has weak ATPase activity which is required for DD reactivation. Activates glycerol-inactivated, O2-inactivated holoenzyme and inactivated enzyme-cyanocobalamin complex. Also reactivates glycerol-inactivated hologlycerol dehydratase, a DD isozyme. This chain is Diol dehydratase-reactivating factor small subunit, found in Klebsiella michiganensis (strain ATCC 8724 / DSM 4798 / JCM 20051 / NBRC 3318 / NRRL B-199 / KCTC 1686 / BUCSAV 143 / CCM 1901).